Reading from the N-terminus, the 532-residue chain is MCNSKPSSASSSLLSCKDKTHISKLETCDTDNPHYSEFRDTDSLDLKRWPSFLEGLEEVKAIGKISGPTAMTGLLMYSRAMISMLFLGYLGELELAGGSLSIGFANITGYSVISGLSMGMEPICGQAYGAKQMKLLGLTLQRTVLLLLSCSVPISFSWLNMRRILLWCGQDEEISSVAQQFLLFAIPDLFLLSLLHPLRIYLRTQNITLPVTYSTAVSVLLHVPLNYLLVVKLEMGVAGVAIAMVLTNLNLVVLLSSFVYFTSVHSDTWVPITIDSLKGWSALLSLAIPTCVSVCLEWWWYEFMIILCGLLANPRATVASMGILIQTTALVYVFPSSLSLGVSTRISNELGAKRPAKARVSMIISLFCAIALGLMAMVFAVLVRHHWGRLFTTDAEILQLTSIALPIVGLCELGNCPQTTGCGVLRGCARPTLGANINLGSFYFVGMPVAILFGFVFKQGFPGLWFGLLAAQATCASLMLCALLRTDWKVQAERAEELTSQTPGKSPPLLPIASSKSRSTSGTEDMMRTMLV.

Transmembrane regions (helical) follow at residues 65–85, 95–115, 136–156, 174–194, 211–231, 235–255, 279–301, 322–342, 363–383, 397–417, 437–457, and 464–484; these read ISGP…ISML, LAGG…VISG, LGLT…PISF, ISSV…LLSL, VTYS…LLVV, MGVA…VVLL, GWSA…WWWY, GILI…SLGV, IISL…AVLV, ILQL…GNCP, INLG…GFVF, and LWFG…CALL. The interval 496 to 532 is disordered; sequence EELTSQTPGKSPPLLPIASSKSRSTSGTEDMMRTMLV. Polar residues predominate over residues 514 to 523; it reads SSKSRSTSGT.

Belongs to the multi antimicrobial extrusion (MATE) (TC 2.A.66.1) family. In terms of tissue distribution, highly expressed in shoot apices relative to leaves. At vegetative stages, highly expressed at the stipules. At reproductive stages, most highly expressed in the mature pollen. Also expressed in the tips of sepals.

The protein localises to the golgi apparatus membrane. Its subcellular location is the late endosome membrane. Its function is as follows. Functions as a multidrug and toxin extrusion transporter. Contributes to iron homeostasis during stress responses and senescence. Could be involved in specifying the lateral organ initiation rate. May act as a negative regulator of hypocotyl cell elongation in the light. This is Protein DETOXIFICATION 48 from Arabidopsis thaliana (Mouse-ear cress).